The primary structure comprises 490 residues: MYENSCSYQTALDLKRVSPPTLAQVKTEECLALGQCSPEWTSYRFHQSTFEQLKQSVEKAKAALQDRSSFFGASSAFSDIYSSQRLTDSLDTLPVQSGNGGGNCLGLPHNPNVGVGVAGVLNYNAVSSSTAGVLSSSGNGVQRHRLDTLQPPSGCSPAVTQHGVITSSAGQVTSGTLDAVSAAPALPSLTASSSSHVEHKVRADKSTLDCATTSSHAAAPSSSSSASDHQQGRISGSKSSNTSGTGGGASASGGGGSALYSSYKSSWGSHSSTQSQGYSSNALGIKHDPHSQLRQPDPYQMFGPTSSRLASSGSGQIQLWQFLLELLSDSNNASCITWEGTNGEFKLTDPDEVARRWGERKSKPNMNYDKLSRALRYYYDKNIMTKVHGKRYAYKFDFQGLAAATQPAASDPTYKYQSDLFMTPYHHSAKLSSFMSPHHGMTSSSASIFPSAASWGNWGSPATNLYQPHSMSHVTPSHVAPHLSSYPHYA.

Disordered regions lie at residues 190–255 (TASS…SGGG) and 271–294 (SSTQSQGYSSNALGIKHDPHSQLR). The segment covering 196–207 (HVEHKVRADKST) has biased composition (basic and acidic residues). Over residues 211-227 (ATTSSHAAAPSSSSSAS) the composition is skewed to low complexity. A compositionally biased stretch (gly residues) spans 244–255 (GTGGGASASGGG). Over residues 271–280 (SSTQSQGYSS) the composition is skewed to low complexity. The ETS DNA-binding region spans 317–397 (IQLWQFLLEL…HGKRYAYKFD (81 aa)).

This sequence belongs to the ETS family. As to expression, embryonic ventral nervous system, higher in the thoracic than abdominal segments.

It localises to the nucleus. In Drosophila melanogaster (Fruit fly), this protein is DNA-binding protein D-ETS-3 (Ets65A).